The chain runs to 372 residues: Putative actin-27 (372 aa).

Belongs to the actin family.

It is found in the cytoplasm. Its subcellular location is the cytoskeleton. It catalyses the reaction ATP + H2O = ADP + phosphate + H(+). Actins are highly conserved proteins that are involved in various types of cell motility and are ubiquitously expressed in all eukaryotic cells. Multiple isoforms are involved in various cellular functions such as cytoskeleton structure, cell mobility, chromosome movement and muscle contraction. The chain is Putative actin-27 (act27) from Dictyostelium discoideum (Social amoeba).